We begin with the raw amino-acid sequence, 469 residues long: ATP synthase subunit beta (469 aa).

155–162 lines the ATP pocket; the sequence is GGAGCGKT.

Belongs to the ATPase alpha/beta chains family. As to quaternary structure, F-type ATPases have 2 components, CF(1) - the catalytic core - and CF(0) - the membrane proton channel. CF(1) has five subunits: alpha(3), beta(3), gamma(1), delta(1), epsilon(1). CF(0) has three main subunits: a(1), b(2) and c(9-12). The alpha and beta chains form an alternating ring which encloses part of the gamma chain. CF(1) is attached to CF(0) by a central stalk formed by the gamma and epsilon chains, while a peripheral stalk is formed by the delta and b chains.

The protein resides in the cell inner membrane. The catalysed reaction is ATP + H2O + 4 H(+)(in) = ADP + phosphate + 5 H(+)(out). In terms of biological role, produces ATP from ADP in the presence of a proton gradient across the membrane. The catalytic sites are hosted primarily by the beta subunits. In Syntrophus aciditrophicus (strain SB), this protein is ATP synthase subunit beta.